The chain runs to 100 residues: Large ribosomal subunit protein uL23 (100 aa).

This sequence belongs to the universal ribosomal protein uL23 family. As to quaternary structure, part of the 50S ribosomal subunit. Contacts protein L29, and trigger factor when it is bound to the ribosome.

One of the early assembly proteins it binds 23S rRNA. One of the proteins that surrounds the polypeptide exit tunnel on the outside of the ribosome. Forms the main docking site for trigger factor binding to the ribosome. In Yersinia pestis bv. Antiqua (strain Antiqua), this protein is Large ribosomal subunit protein uL23.